The sequence spans 346 residues: Beta-ketoacyl-[acyl-carrier-protein] synthase III (346 aa).

Active-site residues include cysteine 120 and histidine 256. The segment at 257 to 261 (QANIR) is ACP-binding. The active site involves asparagine 286.

This sequence belongs to the thiolase-like superfamily. FabH family. In terms of assembly, homodimer.

The protein resides in the cytoplasm. The catalysed reaction is malonyl-[ACP] + acetyl-CoA + H(+) = 3-oxobutanoyl-[ACP] + CO2 + CoA. Its pathway is lipid metabolism; fatty acid biosynthesis. Catalyzes the condensation reaction of fatty acid synthesis by the addition to an acyl acceptor of two carbons from malonyl-ACP. Catalyzes the first condensation reaction which initiates fatty acid synthesis and may therefore play a role in governing the total rate of fatty acid production. Possesses both acetoacetyl-ACP synthase and acetyl transacylase activities. Its substrate specificity determines the biosynthesis of branched-chain and/or straight-chain of fatty acids. The protein is Beta-ketoacyl-[acyl-carrier-protein] synthase III of Deinococcus geothermalis (strain DSM 11300 / CIP 105573 / AG-3a).